We begin with the raw amino-acid sequence, 312 residues long: Olfactory receptor 51I2 (312 aa).

The Extracellular segment spans residues 1–25; sequence MGLFNVTHPAFFLLTGIPGLESSHS. Asn5 is a glycosylation site (N-linked (GlcNAc...) asparagine). A helical membrane pass occupies residues 26 to 46; that stretch reads WLSGPLCVMYAVALGGNTVIL. Over 47–54 the chain is Cytoplasmic; it reads QAVRVEPS. A helical membrane pass occupies residues 55–75; it reads LHEPMYYFLSMLSFSDVAISM. The Extracellular portion of the chain corresponds to 76-99; the sequence is ATLPTVLRTFCLNARNITFDACLI. A disulfide bridge links Cys97 with Cys189. A helical membrane pass occupies residues 100–120; the sequence is QMFLIHFFSMMESGILLAMSF. Over 121–139 the chain is Cytoplasmic; sequence DRYVAICDPLRYATVLTTE. A helical transmembrane segment spans residues 140 to 160; sequence VIAAMGLGAAARSFITLFPLP. Residues 161–196 lie on the Extracellular side of the membrane; the sequence is FLIKRLPICRSNVLSHSYCLHPDMMRLACADISINS. A helical membrane pass occupies residues 197 to 217; it reads IYGLFVLVSTFGMDLFFIFLS. The Cytoplasmic portion of the chain corresponds to 218 to 237; that stretch reads YVLILRSVMATASREERLKA. A helical membrane pass occupies residues 238–258; that stretch reads LNTCVSHILAVLAFYVPMIGV. The Extracellular segment spans residues 259–273; that stretch reads STVHRFGKHVPCYIH. The helical transmembrane segment at 274-294 threads the bilayer; it reads VLMSNVYLFVPPVLNPLIYSA. The Cytoplasmic portion of the chain corresponds to 295–312; it reads KTKEIRRAIFRMFHHIKI.

Belongs to the G-protein coupled receptor 1 family.

It is found in the cell membrane. Functionally, odorant receptor. The protein is Olfactory receptor 51I2 (OR51I2) of Homo sapiens (Human).